The chain runs to 525 residues: Acetyl-CoA hydrolase (525 aa).

280–284 is a CoA binding site; sequence GIGNI. E305 acts as the 5-glutamyl coenzyme A thioester intermediate in catalysis. CoA is bound by residues N395 and G399.

It belongs to the acetyl-CoA hydrolase/transferase family.

It localises to the cytoplasm. It carries out the reaction acetyl-CoA + H2O = acetate + CoA + H(+). Required for utilization of acetate. The sequence is that of Acetyl-CoA hydrolase (acu-8) from Neurospora crassa (strain ATCC 24698 / 74-OR23-1A / CBS 708.71 / DSM 1257 / FGSC 987).